The primary structure comprises 823 residues: MGFGSDLKNSQEAVLKLQDWELRLLETVKKFMALRIKSDKEYAYTLQNLCNQVDKESTVQVNYVSNVSKSWLLMIQQTEQLSRIMKTHAEDLNSGPLHRLTMMIKDKQQVKKSYVGIHQQIEAEMIKVTKTELEKLKSSYRQLIKEMNSAKEKYKEALAKGKETEKAKERYDKATMKLHMLHNQYVLALKGAQLHQSQYYDTTLPLLLDSVQKMQEEMIKALKGIFDDYSQITSLVTEEIVNVHKEIQMSVEQIDPSTEYNNFIDVHRTTAAKEQEIEFDTSLLEENENLQANEIMWNNLTADSLQVMLKTLAEELTQTQQMLLHKEAAVLELEKRIEESFETCEKKSDIVLLLGQKQALEELKQSVQQLRCTEAKCAAQKALLEQKVQENDGKEPPPVVNYEEDARSVTSMERKERLSKFESIRHSIAGIIKSPKSVLGSSTQVCDVISVGERPLAEHDWYHGAIPRIEAQELLKQQGDFLVRESHGKPGEYVLSVYSDGQRRHFIIQFVDNLYRFEGTGFSNIPQLIDHHFNTKQVITKKSGVVLLNPIPKDKKWVLNHEDVSLGELLGKGNFGEVYKGTLKDKTPVAIKTCKEDLPQELKIKFLQEAKILKQYDHPNIVKLIGVCTQRQPVYIIMELVPGGDFLTFLRKRKDELKLKQLVRFSLDVAAGMLYLESKNCIHRDLAARNCLVGENNTLKISDFGMSRQEDGGVYSSSGLKQIPIKWTAPEALNYGRYSSESDVWSFGILLWETFSLGVCPYPGMTNQQAREQVERGYRMSAPQNCPEEVFTIMMKCWDYKPENRPKFNDLHKELTVIKKMIT.

The F-BAR domain maps to 1–259 (MGFGSDLKNS…SVEQIDPSTE (259 aa)). The interval 1–300 (MGFGSDLKNS…QANEIMWNNL (300 aa)) is important for interaction with membranes containing phosphoinositides. Coiled coils occupy residues 123–185 (AEMI…HNQY) and 301–381 (TADS…AAQK). Residues 389–408 (QENDGKEPPPVVNYEEDARS) form a disordered region. Tyr402 is subject to Phosphotyrosine. Ser434 is subject to Phosphoserine. Positions 461 to 551 (WYHGAIPRIE…KSGVVLLNPI (91 aa)) constitute an SH2 domain. Residues 564–817 (VSLGELLGKG…FNDLHKELTV (254 aa)) enclose the Protein kinase domain. Residues 570 to 578 (LGKGNFGEV) and Lys592 contribute to the ATP site. Tyr616 bears the Phosphotyrosine; by autocatalysis mark. Catalysis depends on Asp685, which acts as the Proton acceptor. Tyr715 is modified (phosphotyrosine; by autocatalysis).

This sequence belongs to the protein kinase superfamily. Tyr protein kinase family. Fes/fps subfamily. In terms of assembly, homotrimer. Isoform 4 is a monomer, due to the absence of the N-terminal coiled coil domains. Interacts with CTNND1, EGFR, FLT3, PECAM1 and PDGFR. Interacts (via SH2 domain) with CTTN. Component of a complex that contains at least FER, CTTN and PTK2/FAK1. Interacts with IRS1 and PIK3R1. Interacts with STAT3. Interacts with PPP1CA and regulates its phosphorylation at 'Thr-320'. Interacts with JAK1. Interacts with HSP90; this stabilizes phosphorylated FER and protects FER against proteasomal degradation. Interacts with ARHGDIA, NRP1, PLEC and TMF1. Post-translationally, autophosphorylated. Polyubiquitinated; this leads to proteasomal degradation. Detected in liver and testis. Isoform 4 is detected only in testis (at protein level). Widely expressed.

It is found in the cytoplasm. The protein resides in the cytoskeleton. The protein localises to the cell membrane. Its subcellular location is the cell projection. It localises to the cell junction. It is found in the membrane. The protein resides in the nucleus. The protein localises to the cell cortex. The catalysed reaction is L-tyrosyl-[protein] + ATP = O-phospho-L-tyrosyl-[protein] + ADP + H(+). Its activity is regulated as follows. Activated by phosphatidic acid binding. Activated by hydrogen peroxide (in vitro). Activated by reactive oxygen species (ROS). Its function is as follows. Tyrosine-protein kinase that acts downstream of cell surface receptors for growth factors and plays a role in the regulation of the actin cytoskeleton, microtubule assembly, lamellipodia formation, cell adhesion, cell migration and chemotaxis. Acts downstream of EGFR, KIT, PDGFRA and PDGFRB. Acts downstream of EGFR to promote activation of NF-kappa-B and cell proliferation. May play a role in the regulation of the mitotic cell cycle. Plays a role in the insulin receptor signaling pathway and in activation of phosphatidylinositol 3-kinase. Acts downstream of the activated FCER1 receptor and plays a role in FCER1 (high affinity immunoglobulin epsilon receptor)-mediated signaling in mast cells. Plays a role in the regulation of mast cell degranulation. Plays a role in leukocyte recruitment and diapedesis in response to bacterial lipopolysaccharide (LPS). Phosphorylates CTTN, CTNND1, PTK2/FAK1, GAB1, PECAM1 and PTPN11. May phosphorylate JUP and PTPN1. Can phosphorylate STAT3 according to PubMed:10878010 and PubMed:19159681, but clearly plays a redundant role in STAT3 phosphorylation. According to PubMed:11134346, cells where wild type FER has been replaced by a kinase-dead mutant show no reduction in STAT3 phosphorylation. Phosphorylates TMF1. Isoform 3 lacks kinase activity. This Mus musculus (Mouse) protein is Tyrosine-protein kinase Fer (Fer).